A 374-amino-acid chain; its full sequence is GDSL esterase/lipase 1 (374 aa).

The signal sequence occupies residues 1–25; that stretch reads MENSQLVSITFLAYTIIISIGSINC. Asn34 is a glycosylation site (N-linked (GlcNAc...) asparagine). Catalysis depends on Ser44, which acts as the Nucleophile. Residues Asn184, Asn203, and Asn330 are each glycosylated (N-linked (GlcNAc...) asparagine). Residues Asp338 and His341 each act as charge relay system in the active site. An N-linked (GlcNAc...) asparagine glycan is attached at Asn360.

It belongs to the 'GDSL' lipolytic enzyme family.

It is found in the secreted. Its function is as follows. Confers resistance to the necrotrophic fungus Alternaria brassicicola. Possesses lipase and antimicrobial activities that directly disrupt fungal spore integrity. Triggers systemic resistance, mostly by the ethylene-dependent pathway. In Arabidopsis thaliana (Mouse-ear cress), this protein is GDSL esterase/lipase 1.